We begin with the raw amino-acid sequence, 313 residues long: Monoglyceride lipase (313 aa).

Residues Gly-121–Gly-125 carry the GXSXG motif. The active-site Nucleophile is the Ser-123. Residues Asp-251 and His-281 each act as charge relay system in the active site.

This sequence belongs to the AB hydrolase superfamily. Monoacylglycerol lipase family.

The protein resides in the lipid droplet. It localises to the cytoplasm. Its subcellular location is the endoplasmic reticulum. The protein localises to the mitochondrion outer membrane. It catalyses the reaction Hydrolyzes glycerol monoesters of long-chain fatty acids.. The enzyme catalyses a fatty acid ethyl ester + H2O = ethanol + a fatty acid + H(+). The catalysed reaction is 1-(9Z-octadecenoyl)-glycerol + H2O = glycerol + (9Z)-octadecenoate + H(+). It carries out the reaction 2-(9Z-octadecenoyl)-glycerol + H2O = glycerol + (9Z)-octadecenoate + H(+). It catalyses the reaction 1-hexadecanoylglycerol + H2O = glycerol + hexadecanoate + H(+). The enzyme catalyses 2-hexadecanoylglycerol + H2O = glycerol + hexadecanoate + H(+). The catalysed reaction is ethyl hexadecanoate + H2O = ethanol + hexadecanoate + H(+). It carries out the reaction ethyl (9Z)-octadecenoate + H2O = ethanol + (9Z)-octadecenoate + H(+). It catalyses the reaction ethyl (9Z)-hexadecenoate + H2O = (9Z)-hexadecenoate + ethanol + H(+). The enzyme catalyses ethyl octadecanoate + H2O = ethanol + octadecanoate + H(+). Its pathway is glycerolipid metabolism; triacylglycerol degradation. Functionally, converts monoacylglycerides (MAG) to free fatty acids and glycerol. Has a strong preference for monounsaturated monoglycerides. Required for efficient degradation of MAG, short-lived intermediates of glycerolipid metabolism which may also function as lipid signaling molecules. Controls inactivation of the signaling lipid N-palmitoylethanolamine (PEA). Involved in fatty acid ethyl ester (FAEE) catabolism. FAEEs are non-oxidative metabolites of ethanol that are transiently incorporated into lipid droplets (LDs). Their mobilization by LD-resident FAEE hydrolases facilitates a controlled metabolism of these potentially toxic lipid metabolites. This chain is Monoglyceride lipase (YJU3), found in Saccharomyces cerevisiae (strain ATCC 204508 / S288c) (Baker's yeast).